Reading from the N-terminus, the 182-residue chain is WUSCHEL-related homeobox 5 (182 aa).

Residues Met-1–Arg-24 form a disordered region. The segment at residues Thr-20–Arg-84 is a DNA-binding region (homeobox; WUS-type).

The protein belongs to the WUS homeobox family. As to expression, specifically expressed in the central cells of a quiescent center (QC) of the root.

It is found in the nucleus. Its function is as follows. Transcription factor, which may be involved in the specification and maintenance of the stem cells (QC cells) in the root apical meristem (RAM). The sequence is that of WUSCHEL-related homeobox 5 (WOX5) from Arabidopsis thaliana (Mouse-ear cress).